A 510-amino-acid chain; its full sequence is ETS translocation variant 5 (510 aa).

The tract at residues 132 to 245 (KPLTPPATPL…PGDSRPSYHR (114 aa)) is disordered. Residues 163-174 (TPGAGPVQGVGP) show a composition bias toward low complexity. The span at 211 to 224 (QYPSEQRFQRQLSE) shows a compositional bias: polar residues. Ser248 is subject to Phosphoserine. Residue Lys350 forms a Glycyl lysine isopeptide (Lys-Gly) (interchain with G-Cter in SUMO2) linkage. Positions 368 to 448 (LQLWQFLVTL…AGERYVYKFV (81 aa)) form a DNA-binding region, ETS.

It belongs to the ETS family. Interacts (via C-terminal) with ZMYM5 (via N-terminal 120 amino acid region). As to expression, in the brain, expressed predominantly in the cerebral cortex, the amygdala and the hypothalamus. Within the cerebral cortex, there is conspicuously high expression in cortical layers 2, 4 and 6 while expression is almost absent from layers 1, 3 and 5. High expression is also observed in the dorsal and ventral endopiriform claustrum. Strong expression is observed in limited parts of the amygdala including the basolateral amygdaloid nucleus, the bed stria terminalis and the central amygdaloid nucleus. Low to moderate levels are found in the hypothalamus while expression is almost absent in the thalamus. Hypothalamic expression is seen in the dorsomedial hypothalamic nucleus and also the central, dorsomedial and ventrolateral parts of the ventromedial hypothalamic nucleus. Strong expression is also identified in the nigrostriatal tract. In the mesencephalon, expression is restricted to the ventral tegmental area including the parabrachial pigmented nucleus. In the hippocampus, strongly expressed in the pyramidal cell layer. Some expression is also found in the lacunosum moleculare layer. Low levels of expression in the cerebellum, including the granular, molecular and Purkinje cell layers.

The protein localises to the nucleus. Binds to DNA sequences containing the consensus nucleotide core sequence 5'-GGAA.-3'. This is ETS translocation variant 5 (Etv5) from Mus musculus (Mouse).